The sequence spans 108 residues: Tubulin-specific chaperone A (108 aa).

Ala-2 is subject to N-acetylalanine.

It belongs to the TBCA family. Supercomplex made of cofactors A to E. Cofactors A and D function by capturing and stabilizing tubulin in a quasi-native conformation. Cofactor E binds to the cofactor D-tubulin complex; interaction with cofactor C then causes the release of tubulin polypeptides that are committed to the native state.

It is found in the cytoplasm. It localises to the cytoskeleton. Functionally, tubulin-folding protein; involved in the early step of the tubulin folding pathway. The chain is Tubulin-specific chaperone A (TBCA) from Homo sapiens (Human).